We begin with the raw amino-acid sequence, 193 residues long: MKIGILALQGAFAEHAKVLDQLGVESVELRNLDDFQQDQSDLSGLILPGGESTTMGKLLRDQNMLLPIREAILSGLPVFGTCAGLILLAKEITSQKESHLGTMDMVVERNAYGRQLGSFYTEAECKGVGKIPMTFIRGPIISSVGEGVEILAIVNNQIVAAQEKNMLVSSFHPELTDDVRLHQYFINMCKEKS.

An L-glutamine-binding site is contributed by 50-52 (GES). Cys-82 serves as the catalytic Nucleophile. L-glutamine-binding positions include Arg-109 and 136–137 (IR). Residues His-172 and Glu-174 each act as charge relay system in the active site.

It belongs to the glutaminase PdxT/SNO family. In the presence of PdxS, forms a dodecamer of heterodimers. Only shows activity in the heterodimer.

It catalyses the reaction aldehydo-D-ribose 5-phosphate + D-glyceraldehyde 3-phosphate + L-glutamine = pyridoxal 5'-phosphate + L-glutamate + phosphate + 3 H2O + H(+). The enzyme catalyses L-glutamine + H2O = L-glutamate + NH4(+). It participates in cofactor biosynthesis; pyridoxal 5'-phosphate biosynthesis. In terms of biological role, catalyzes the hydrolysis of glutamine to glutamate and ammonia as part of the biosynthesis of pyridoxal 5'-phosphate. The resulting ammonia molecule is channeled to the active site of PdxS. The chain is Pyridoxal 5'-phosphate synthase subunit PdxT from Streptococcus pneumoniae serotype 2 (strain D39 / NCTC 7466).